The following is a 390-amino-acid chain: 1-deoxy-D-xylulose 5-phosphate reductoisomerase (390 aa).

NADPH contacts are provided by T10, G11, S12, V13, and N124. Position 125 (K125) interacts with 1-deoxy-D-xylulose 5-phosphate. E126 is a binding site for NADPH. Residue D150 coordinates Mn(2+). The 1-deoxy-D-xylulose 5-phosphate site is built by S151, E152, S181, and H204. Residue E152 participates in Mn(2+) binding. G210 serves as a coordination point for NADPH. S217, N222, K223, and E226 together coordinate 1-deoxy-D-xylulose 5-phosphate. E226 lines the Mn(2+) pocket.

This sequence belongs to the DXR family. The cofactor is Mg(2+). Requires Mn(2+) as cofactor.

It catalyses the reaction 2-C-methyl-D-erythritol 4-phosphate + NADP(+) = 1-deoxy-D-xylulose 5-phosphate + NADPH + H(+). It participates in isoprenoid biosynthesis; isopentenyl diphosphate biosynthesis via DXP pathway; isopentenyl diphosphate from 1-deoxy-D-xylulose 5-phosphate: step 1/6. Catalyzes the NADPH-dependent rearrangement and reduction of 1-deoxy-D-xylulose-5-phosphate (DXP) to 2-C-methyl-D-erythritol 4-phosphate (MEP). This is 1-deoxy-D-xylulose 5-phosphate reductoisomerase from Janthinobacterium sp. (strain Marseille) (Minibacterium massiliensis).